Consider the following 330-residue polypeptide: Ribosomal RNA small subunit methyltransferase A (330 aa).

S-adenosyl-L-methionine is bound by residues histidine 29, leucine 31, glycine 56, glutamate 77, and aspartate 98. A disordered region spans residues 115–158 (PVRSAGLPQAETAPKGLEPAGSSSQQGPRDWLRQTAGAAAPSRG). Asparagine 177 is a binding site for S-adenosyl-L-methionine.

The protein belongs to the class I-like SAM-binding methyltransferase superfamily. rRNA adenine N(6)-methyltransferase family. RsmA subfamily.

The protein resides in the cytoplasm. It catalyses the reaction adenosine(1518)/adenosine(1519) in 16S rRNA + 4 S-adenosyl-L-methionine = N(6)-dimethyladenosine(1518)/N(6)-dimethyladenosine(1519) in 16S rRNA + 4 S-adenosyl-L-homocysteine + 4 H(+). In terms of biological role, specifically dimethylates two adjacent adenosines (A1518 and A1519) in the loop of a conserved hairpin near the 3'-end of 16S rRNA in the 30S particle. May play a critical role in biogenesis of 30S subunits. The protein is Ribosomal RNA small subunit methyltransferase A of Polaromonas sp. (strain JS666 / ATCC BAA-500).